Here is a 310-residue protein sequence, read N- to C-terminus: 4-hydroxyproline 2-epimerase (310 aa).

The active-site Proton acceptor is cysteine 88. Residues 89–90 (GH), histidine 208, and aspartate 232 contribute to the substrate site. The active-site Proton donor is cysteine 236. Residue 237–238 (GT) participates in substrate binding.

This sequence belongs to the proline racemase family.

It carries out the reaction trans-4-hydroxy-L-proline = cis-4-hydroxy-D-proline. In terms of biological role, catalyzes the epimerization of trans-4-hydroxy-L-proline (t4LHyp) to cis-4-hydroxy-D-proline (c4DHyp). Is likely involved in a degradation pathway that converts t4LHyp to alpha-ketoglutarate. Can also catalyze the dehydration of trans-3-hydroxy-L-proline (t3LHyp) to Delta(1)-pyrroline-2-carboxylate (Pyr2C), albeit with 42-fold lower efficiency. Displays no proline racemase activity. This is 4-hydroxyproline 2-epimerase from Burkholderia thailandensis (strain ATCC 700388 / DSM 13276 / CCUG 48851 / CIP 106301 / E264).